A 186-amino-acid chain; its full sequence is Ribosome-recycling factor (186 aa).

The protein belongs to the RRF family.

The protein resides in the cytoplasm. Its function is as follows. Responsible for the release of ribosomes from messenger RNA at the termination of protein biosynthesis. May increase the efficiency of translation by recycling ribosomes from one round of translation to another. The protein is Ribosome-recycling factor of Beijerinckia indica subsp. indica (strain ATCC 9039 / DSM 1715 / NCIMB 8712).